A 448-amino-acid polypeptide reads, in one-letter code: Ribosomal protein uS12 methylthiotransferase RimO (448 aa).

The MTTase N-terminal domain occupies 16 to 126 (PRISFVSLGC…VVAAVHEAVP (111 aa)). Residues cysteine 25, cysteine 61, cysteine 90, cysteine 157, cysteine 161, and cysteine 164 each contribute to the [4Fe-4S] cluster site. In terms of domain architecture, Radical SAM core spans 143–380 (LTPRHYAYLK…MEAQSHVSLR (238 aa)). Positions 383-448 (RAKVGKRLSV…DAYDLHGIAV (66 aa)) constitute a TRAM domain.

It belongs to the methylthiotransferase family. RimO subfamily. Requires [4Fe-4S] cluster as cofactor.

The protein localises to the cytoplasm. It carries out the reaction L-aspartate(89)-[ribosomal protein uS12]-hydrogen + (sulfur carrier)-SH + AH2 + 2 S-adenosyl-L-methionine = 3-methylsulfanyl-L-aspartate(89)-[ribosomal protein uS12]-hydrogen + (sulfur carrier)-H + 5'-deoxyadenosine + L-methionine + A + S-adenosyl-L-homocysteine + 2 H(+). Functionally, catalyzes the methylthiolation of an aspartic acid residue of ribosomal protein uS12. The protein is Ribosomal protein uS12 methylthiotransferase RimO of Methylorubrum extorquens (strain PA1) (Methylobacterium extorquens).